The following is a 755-amino-acid chain: Serine/threonine-protein kinase GA29083 (755 aa).

Over residues 18-52 the composition is skewed to low complexity; the sequence is QASASGSGTPKKTAASSAAAQNSKQLLDQLSQQQK. A disordered region spans residues 18–128; sequence QASASGSGTP…GSANTNGSAS (111 aa). 2 stretches are compositionally biased toward basic and acidic residues: residues 53 to 66 and 74 to 84; these read AQEE…RDCD and EPEKDLDELRD. Residues 87-99 show a composition bias toward polar residues; it reads GSLTGSGSVGKSN. Residues 100–128 show a composition bias toward low complexity; that stretch reads GSLSGASSTTSAPAGTSTPGSANTNGSAS. 2 Doublecortin domains span residues 157–243 and 314–397; these read HRIK…VDYN and RIVT…VEDF. A Protein kinase domain is found at 484–742; that stretch reads YTLSQIIGDG…SEDILDHYWT (259 aa). ATP is bound by residues 490–498 and Lys-513; that span reads IGDGNFAIV. Asp-605 serves as the catalytic Proton acceptor.

Belongs to the protein kinase superfamily. CAMK Ser/Thr protein kinase family. CaMK subfamily.

It carries out the reaction L-seryl-[protein] + ATP = O-phospho-L-seryl-[protein] + ADP + H(+). The catalysed reaction is L-threonyl-[protein] + ATP = O-phospho-L-threonyl-[protein] + ADP + H(+). The sequence is that of Serine/threonine-protein kinase GA29083 from Drosophila pseudoobscura pseudoobscura (Fruit fly).